A 683-amino-acid polypeptide reads, in one-letter code: Amphiphysin (683 aa).

Coiled coils occupy residues 10–83 and 144–191; these read AKNV…SLHE and DYDS…QEEL. Residues 24–240 form the BAR domain; the sequence is VLQKLGKADE…MTKLGDQHAD (217 aa). Disordered regions lie at residues 244 to 311, 421 to 443, and 455 to 599; these read SIQG…KVTP, AETEQALPTEPQAEEPPTTAAAP, and EPKE…ASLS. Position 252 is a phosphoserine (serine 252). Threonine 260 bears the Phosphothreonine mark. Pro residues predominate over residues 261–274; the sequence is PSPPEEASPLPSPT. Phosphoserine is present on residues serine 262, serine 268, serine 272, and serine 276. At threonine 280 the chain carries Phosphothreonine. Low complexity-rich tracts occupy residues 424–443 and 468–477; these read EQALPTEPQAEEPPTTAAAP and AGETVGTEGS. Serine 496 carries the phosphoserine modification. A compositionally biased stretch (basic and acidic residues) spans 539–559; it reads SNHEGEEHQETTTGTETREAT. The segment covering 585 to 596 has biased composition (low complexity); the sequence is AATPAPAGAVDA. One can recognise an SH3 domain in the interval 610–683; that stretch reads GFLYKVETLH…FPENFTRHLE (74 aa). Serine 626 carries the post-translational modification Phosphoserine.

As to quaternary structure, heterodimer with BIN1. Binds SH3GLB1. Interacts with REPS1 and SGIP1. Binds AP2A2. Interacts with AP2B1. Interacts with DNM1 and SYNJ1.

The protein localises to the cytoplasmic vesicle. It is found in the secretory vesicle. It localises to the synaptic vesicle membrane. The protein resides in the cytoplasm. Its subcellular location is the cytoskeleton. Its function is as follows. May participate in mechanisms of regulated exocytosis in synapses and certain endocrine cell types. May control the properties of the membrane associated cytoskeleton. This is Amphiphysin (Amph) from Rattus norvegicus (Rat).